The following is a 495-amino-acid chain: Neuronal acetylcholine receptor subunit alpha-3 (495 aa).

An N-terminal signal peptide occupies residues 1 to 21 (MARRSRLRRLLLLLLLPVAST). At 22 to 240 (SDAEHRLFER…PLFYTINLII (219 aa)) the chain is on the extracellular side. N-linked (GlcNAc...) asparagine glycosylation is found at Asn45 and Asn162. Intrachain disulfides connect Cys149/Cys163 and Cys213/Cys214. The helical transmembrane segment at 241 to 256 (PCLLISFLTVLVFYLP) threads the bilayer. Topologically, residues 257-258 (SD) are cytoplasmic. The helical transmembrane segment at 259–275 (CGEKVTLCISVLLSLTV) threads the bilayer. Glu261 lines the Na(+) pocket. Residues 276-297 (FLLVITETIPSTSLVIPLIGEY) lie on the Extracellular side of the membrane. The helical transmembrane segment at 298–316 (LLFTMIFVTLSIVITVFVL) threads the bilayer. The Cytoplasmic segment spans residues 317 to 464 (NVHYRTPTTH…QDDWKYVAMV (148 aa)). Phosphoserine occurs at positions 403 and 406. A helical transmembrane segment spans residues 465–483 (IDRIFLWVFILVCILGTAG). Over 484-495 (LFLQPLMTRDDA) the chain is Extracellular.

It belongs to the ligand-gated ion channel (TC 1.A.9) family. Acetylcholine receptor (TC 1.A.9.1) subfamily. Alpha-3/CHRNA3 sub-subfamily. In terms of assembly, neuronal AChR is composed of two different types of subunits: alpha and beta. CHRNA3/Alpha-3 subunit can be combined to CHRNB2/beta-2 or CHRNB4/beta-4 to give rise to functional receptors. Part of a complex composed of STUB1/CHIP, VCP/p97, CHRNA3, and UBXN2A that modulates the ubiquitination and endoplasmic reticulum-associated degradation (ERAD) of CHRNA3. Within the complex UBXN2A acts as a scaffold protein required for the interaction of CHRNA3 with VCP/p97, this interaction also inhibits CHRNA3 ubiquitination by STUB1/CHIP and subsequently ERAD. Interacts with UBXN2A (via SEP domain), the interaction is required for the interaction of CHRNA3 in the STUB1:VCP:UBXN2A complex. Interacts with RIC3; which is required for proper folding and assembly. Interacts with LYPD6. In terms of processing, ubiquitinated; by STUB1/CHIP and thereafter degraded by the 26S proteosome complex.

It is found in the synaptic cell membrane. Its subcellular location is the cell membrane. It localises to the endoplasmic reticulum. The protein localises to the golgi apparatus. It carries out the reaction K(+)(in) = K(+)(out). The catalysed reaction is Na(+)(in) = Na(+)(out). It catalyses the reaction Ca(2+)(in) = Ca(2+)(out). Its activity is regulated as follows. Activated by a myriad of ligands such as acetylcholine, cytisine, nicotine, choline and epibatidine. The heteropentamer CHRNA3:CHRNB2 activity is blocked by alpha-conotoxins ImI, ImII, PnIA, GID and MII. The heteropentamer CHRNA3:CHRNB4 activity is blocked by the alpha-conotoxin ImI and AuIB. Functionally, component of neuronal acetylcholine receptors (nAChRs) that function as pentameric, ligand-gated cation channels with high calcium permeability among other activities. nAChRs are excitatory neurotrasnmitter receptors formed by a collection of nAChR subunits known to mediate synaptic transmission in the nervous system and the neuromuscular junction. Each nAchR subunit confers differential attributes to channel properties, including activation, deactivation and desensitization kinetics, pH sensitivity, cation permeability, and binding to allosteric modulators. CHRNA3 forms heteropentameric neuronal acetylcholine receptors with CHRNB2 and CHRNB4. CHRNA3:CHRNB4 being predominant in neurons of the autonomic ganglia, it is known as ganglionic nicotinic receptor. CHRNA3:CHRNB4 also plays an important role in the habenulo-interpeduncular tract, modulating the mesolimbic dopamine system and affecting reward circuits and addiction. Hypothalamic CHRNA3:CHRNB4 nAChR activation by nicotine leads to activation of POMC neurons and a decrease in food intake. Also expressed in the urothelium where it modulates reflex bladder activity by increasing intracellular calcium through extracellular influx and basal ATP release. The sequence is that of Neuronal acetylcholine receptor subunit alpha-3 (CHRNA3) from Bos taurus (Bovine).